Reading from the N-terminus, the 867-residue chain is Heat shock 70 kDa protein 17 (867 aa).

The first 24 residues, 1–24 (MGKIFSWLVVLLSLISLVPVPSES), serve as a signal peptide directing secretion. Composition is skewed to polar residues over residues 560-575 (TIDS…ATDE) and 587-598 (DAENSTASNTTA). 2 disordered regions span residues 560–607 (TIDS…ASLG) and 829–867 (PKPK…HDEL). The segment covering 833-867 (PKIEKVTKTENTTKEEEQSKSSDEAAKEEESHDEL) has biased composition (basic and acidic residues). Positions 865–867 (DEL) match the Prevents secretion from ER motif.

Belongs to the heat shock protein 70 (TC 1.A.33) family. HSP110/SSE subfamily.

The protein localises to the endoplasmic reticulum lumen. The chain is Heat shock 70 kDa protein 17 (HSP70-17) from Arabidopsis thaliana (Mouse-ear cress).